The chain runs to 440 residues: Trigger factor (440 aa).

A PPIase FKBP-type domain is found at 163–248 (GDILTVDFLG…AKALKRRVAP (86 aa)).

It belongs to the FKBP-type PPIase family. Tig subfamily.

It localises to the cytoplasm. It catalyses the reaction [protein]-peptidylproline (omega=180) = [protein]-peptidylproline (omega=0). Functionally, involved in protein export. Acts as a chaperone by maintaining the newly synthesized protein in an open conformation. Functions as a peptidyl-prolyl cis-trans isomerase. This chain is Trigger factor, found in Acidiphilium cryptum (strain JF-5).